The primary structure comprises 582 residues: Probable inorganic phosphate transporter 1-9 (582 aa).

At 1-23 the chain is on the cytoplasmic side; it reads MAPRIRVLAALDQARTQYYHFKA. The chain crosses the membrane as a helical span at residues 24–44; the sequence is IVIAGMGLFTDSYDLFCISPV. Residues 45–75 lie on the Extracellular side of the membrane; the sequence is MKIFGRVYYAPSGSVDGSGSGPGVTPPAVVS. The helical transmembrane segment at 76–96 threads the bilayer; that stretch reads ATVGVALLGAVAGNVVFGALG. The Cytoplasmic portion of the chain corresponds to 97–103; it reads DRVGRRR. The helical transmembrane segment at 104 to 124 threads the bilayer; sequence VYGACLLLMVCSSVGSGLSVC. Residues 125–130 are Extracellular-facing; it reads RTRRCA. A helical membrane pass occupies residues 131-151; sequence LASLCFFRFLLGVGVGGDYPL. The Cytoplasmic portion of the chain corresponds to 152–165; that stretch reads SATIMSEFANRRTR. The helical transmembrane segment at 166 to 186 threads the bilayer; it reads GAFIAAVFSMQGFGILVSSAV. Residues 187 to 210 are Extracellular-facing; sequence TMAVAAAFDHYTGYPAPLDTPECA. The chain crosses the membrane as a helical span at residues 211-231; it reads DLAWRIILMAGAVPAALTYYW. Residues 232–307 lie on the Cytoplasmic side of the membrane; it reads RMSMPETARY…RRFVRQHGRD (76 aa). A helical membrane pass occupies residues 308 to 328; the sequence is LFACAAAWFLLDIPYYSSTLF. Residues 329-354 lie on the Extracellular side of the membrane; that stretch reads QSQIYRPWFPPAAKVNAFQEAFNVAK. The helical transmembrane segment at 355 to 375 threads the bilayer; it reads FQAVIAVASTIPGYFAAMLLI. Residues 376–385 lie on the Cytoplasmic side of the membrane; it reads ERAGRRRLQM. The chain crosses the membrane as a helical span at residues 386-406; sequence AGFLLMAVFLFALAGPYDGYW. Over 407–415 the chain is Extracellular; it reads RDHAKTAGY. The chain crosses the membrane as a helical span at residues 416–436; sequence IVLYSLTFFSANLGPNTTTFI. The Cytoplasmic portion of the chain corresponds to 437 to 451; that stretch reads LPAELFPARFRSTCH. A helical membrane pass occupies residues 452–472; the sequence is GLSGAAGKLGALVGSIGFLWA. Residues 473 to 485 lie on the Extracellular side of the membrane; sequence SQQKDGAAAGHLP. The helical transmembrane segment at 486 to 506 threads the bilayer; it reads GIGMMYALFVLGGICLLGLAL. Over 507 to 582 the chain is Cytoplasmic; sequence TYAFTPETMT…SPILPHRMSL (76 aa). The interval 519–541 is disordered; the sequence is LEENESSVQAQSQVGDGGSDAGN.

Belongs to the major facilitator superfamily. Phosphate:H(+) symporter (TC 2.A.1.9) family. Expressed at low levels in roots.

It is found in the membrane. Functionally, high-affinity transporter for external inorganic phosphate. This chain is Probable inorganic phosphate transporter 1-9 (PHT1-9), found in Oryza sativa subsp. japonica (Rice).